A 204-amino-acid chain; its full sequence is Protein Nef (204 aa).

Residues 1-33 (MGGKWSKRRAEGWQTIRERMRRAEPAEPAADGV) are disordered. Gly-2 is lipidated: N-myristoyl glycine; by host. Ser-6 is subject to Phosphoserine; by host. Positions 8-25 (RRAEGWQTIRERMRRAEP) are enriched in basic and acidic residues. Residues 63–66 (EEGE) are acidic; interacts with host PACS1 and PACS2; stabilizes the interaction of NEF/MHC-I with host AP1M1; necessary for MHC-I internalization. Positions 70–79 (PVRPQVPLRP) are SH3-binding; interaction with Src family tyrosine kinases. The short motif at 73–76 (PQVP) is the PxxP; stabilizes the interaction of NEF/MHC-I with host AP1M1; necessary for MHC-I internalization element. Positions 109–125 (DILDLWVYHTQGFFPDW) are mediates dimerization, Nef-PTE1 interaction. A binding to ATP6V1H region spans residues 149-179 (VEPDEGENNREDNSLLHPANQHGVEDSERQV). Residues 163–164 (LL) carry the Dileucine internalization motif; necessary for CD4 internalization motif. Positions 173–174 (ED) match the Diacidic; necessary for CD4 internalization motif.

This sequence belongs to the lentivirus primate group Nef protein family. As to quaternary structure, monomer; cytosolic form. Homodimer; membrane bound form. Interacts with Nef associated p21-activated kinase (PAK2); this interaction activates PAK2. Associates with the Nef-MHC-I-AP1 complex; this complex is required for MHC-I internalization. Interacts (via C-terminus) with host PI3-kinase. Interacts with host PACS1; this interaction seems to be weak. Interacts with host PACS2. Interacts with host LCK and MAPK3; these interactions inhibit the kinase activity of the latter. Interacts with host ATP6V1H; this interaction may play a role in CD4 endocytosis. Associates with the CD4-Nef-AP2 complex; this complex is required for CD4 internalization. Interacts with host AP2 subunit alpha and AP2 subunit sigma2. Interacts with TCR-zeta chain; this interaction up-regulates the Fas ligand (FasL) surface expression. Interacts with host HCK, LYN, and SRC; these interactions activate the Src family kinases. Interacts with MAP3K5; this interaction inhibits the Fas and TNFR-mediated death signals. Interacts with beta-COP and PTE1. Interacts with human RACK1; this increases Nef phosphorylation by PKC. Interacts with TP53; this interaction decreases the half-life of TP53, protecting the infected cell against p53-mediated apoptosis. The virion-associated Nef proteins are cleaved by the viral protease to release the soluble C-terminal core protein. Nef is probably cleaved concomitantly with viral structural proteins on maturation of virus particles. In terms of processing, myristoylated. Post-translationally, phosphorylated on serine residues, probably by host PKCdelta and theta.

It is found in the host cell membrane. Its subcellular location is the virion. The protein localises to the secreted. It localises to the host Golgi apparatus membrane. Its function is as follows. Factor of infectivity and pathogenicity, required for optimal virus replication. Alters numerous pathways of T-lymphocyte function and down-regulates immunity surface molecules in order to evade host defense and increase viral infectivity. Alters the functionality of other immunity cells, like dendritic cells, monocytes/macrophages and NK cells. Functionally, in infected CD4(+) T-lymphocytes, down-regulates the surface MHC-I, mature MHC-II, CD4, CD28, CCR5 and CXCR4 molecules. Mediates internalization and degradation of host CD4 through the interaction of with the cytoplasmic tail of CD4, the recruitment of AP-2 (clathrin adapter protein complex 2), internalization through clathrin coated pits, and subsequent transport to endosomes and lysosomes for degradation. Diverts host MHC-I molecules to the trans-Golgi network-associated endosomal compartments by an endocytic pathway to finally target them for degradation. MHC-I down-regulation may involve AP-1 (clathrin adapter protein complex 1) or possibly Src family kinase-ZAP70/Syk-PI3K cascade recruited by PACS2. In consequence infected cells are masked for immune recognition by cytotoxic T-lymphocytes. Decreasing the number of immune receptors also prevents reinfection by more HIV particles (superinfection). Down-regulates host SERINC3 and SERINC5 thereby excluding these proteins from the viral particles. Virion infectivity is drastically higher when SERINC3 or SERINC5 are excluded from the viral envelope, because these host antiviral proteins impair the membrane fusion event necessary for subsequent virion penetration. Bypasses host T-cell signaling by inducing a transcriptional program nearly identical to that of anti-CD3 cell activation. Interaction with TCR-zeta chain up-regulates the Fas ligand (FasL). Increasing surface FasL molecules and decreasing surface MHC-I molecules on infected CD4(+) cells send attacking cytotoxic CD8+ T-lymphocytes into apoptosis. In terms of biological role, plays a role in optimizing the host cell environment for viral replication without causing cell death by apoptosis. Protects the infected cells from apoptosis in order to keep them alive until the next virus generation is ready to strike. Inhibits the Fas and TNFR-mediated death signals by blocking MAP3K5/ASK1. Decreases the half-life of TP53, protecting the infected cell against p53-mediated apoptosis. Inhibits the apoptotic signals regulated by the Bcl-2 family proteins through the formation of a Nef/PI3-kinase/PAK2 complex that leads to activation of PAK2 and induces phosphorylation of host BAD. Its function is as follows. Extracellular Nef protein targets CD4(+) T-lymphocytes for apoptosis by interacting with CXCR4 surface receptors. The chain is Protein Nef from Human immunodeficiency virus type 1 group M subtype B (strain 89.6) (HIV-1).